Reading from the N-terminus, the 385-residue chain is tRNA (guanine(26)-N(2))-dimethyltransferase (385 aa).

The Trm1 methyltransferase domain occupies 1-379 (MNITEGVVEL…ATIAEIRSAT (379 aa)). S-adenosyl-L-methionine-binding residues include arginine 37, arginine 67, aspartate 82, aspartate 108, and alanine 109. Zn(2+) is bound by residues cysteine 247, cysteine 250, cysteine 267, and cysteine 270.

Belongs to the class I-like SAM-binding methyltransferase superfamily. Trm1 family.

The catalysed reaction is guanosine(26) in tRNA + 2 S-adenosyl-L-methionine = N(2)-dimethylguanosine(26) in tRNA + 2 S-adenosyl-L-homocysteine + 2 H(+). Dimethylates a single guanine residue at position 26 of a number of tRNAs using S-adenosyl-L-methionine as donor of the methyl groups. This is tRNA (guanine(26)-N(2))-dimethyltransferase from Haloquadratum walsbyi (strain DSM 16790 / HBSQ001).